Reading from the N-terminus, the 74-residue chain is Sec-independent protein translocase protein TatA (74 aa).

A helical transmembrane segment spans residues 1-21 (MGSIGMTELLLIFGIIVLLFG).

It belongs to the TatA/E family. In terms of assembly, forms a complex with TatC.

It is found in the cell inner membrane. Part of the twin-arginine translocation (Tat) system that transports large folded proteins containing a characteristic twin-arginine motif in their signal peptide across membranes. TatA could form the protein-conducting channel of the Tat system. This chain is Sec-independent protein translocase protein TatA, found in Sulfurihydrogenibium sp. (strain YO3AOP1).